The primary structure comprises 92 residues: UPF0250 protein Smlt4048 (92 aa).

The protein belongs to the UPF0250 family.

In Stenotrophomonas maltophilia (strain K279a), this protein is UPF0250 protein Smlt4048.